A 373-amino-acid polypeptide reads, in one-letter code: Potential protein lysine methyltransferase SET6 (373 aa).

The 327-residue stretch at 12-338 (PFFQVRQTKW…KDEQICIDYS (327 aa)) folds into the SET domain.

It belongs to the class V-like SAM-binding methyltransferase superfamily.

Involved in resistance to compounds that target ergosterol biosynthesis, including fenpropimorph, dyclonine, and alverine citrate. Since a deletion in the absence of these compounds does not have an effect on growth, is more likely to be involved in compound availability. This is Potential protein lysine methyltransferase SET6 (SET6) from Saccharomyces cerevisiae (strain ATCC 204508 / S288c) (Baker's yeast).